The primary structure comprises 406 residues: ATPase ASNA1 homolog (406 aa).

21–28 is an ATP binding site; it reads KGGVGKTT. Asp62 is an active-site residue. Residues Glu300 and Asn327 each contribute to the ATP site. Cys339 and Cys342 together coordinate Zn(2+).

The protein belongs to the arsA ATPase family. As to quaternary structure, homodimer.

It localises to the cytoplasm. The protein localises to the endoplasmic reticulum. Functionally, ATPase required for the post-translational delivery of tail-anchored (TA) proteins to the endoplasmic reticulum. Recognizes and selectively binds the transmembrane domain of TA proteins in the cytosol. This complex then targets to the endoplasmic reticulum by membrane-bound receptors, where the tail-anchored protein is released for insertion. This process is regulated by ATP binding and hydrolysis. ATP binding drives the homodimer towards the closed dimer state, facilitating recognition of newly synthesized TA membrane proteins. ATP hydrolysis is required for insertion. Subsequently, the homodimer reverts towards the open dimer state, lowering its affinity for the membrane-bound receptor, and returning it to the cytosol to initiate a new round of targeting. This is ATPase ASNA1 homolog from Leishmania braziliensis.